Consider the following 30-residue polypeptide: Cycloviolacin-H4 (30 aa).

The cyclopeptide (Gly-Asn) cross-link spans 1 to 30; it reads GIPCAESCVWIPCTVTALLGCSCSNNVCYN. Disulfide bonds link Cys-4–Cys-21, Cys-8–Cys-23, and Cys-13–Cys-28.

This is a cyclic peptide.

Probably participates in a plant defense mechanism. Has potent hemolytic activity. The chain is Cycloviolacin-H4 from Viola hederacea (Australian violet).